Here is a 656-residue protein sequence, read N- to C-terminus: ATP-dependent zinc metalloprotease FtsH (656 aa).

Residues 1 to 45 (MAIFARRIGLNQHSAYGSRQRVIVMKNFGKKALIKQQSPKRVAWT) are Cytoplasmic-facing. A helical transmembrane segment spans residues 46–66 (GALAASLIMLPTMFGGNPVLA). Topologically, residues 67-147 (QKAERESLSY…EISSANSRAA (81 aa)) are lumenal. The chain crosses the membrane as a helical span at residues 148 to 168 (VGLLINLMWILPLVALMLLFL). At 169–656 (RRSTNASSQA…DEQLSMVNSQ (488 aa)) the chain is on the cytoplasmic side. Position 239–246 (239–246 (GPPGTGKT)) interacts with ATP. Histidine 460 lines the Zn(2+) pocket. Glutamate 461 is a catalytic residue. Zn(2+) is bound by residues histidine 464 and aspartate 538.

In the central section; belongs to the AAA ATPase family. It in the C-terminal section; belongs to the peptidase M41 family. In terms of assembly, homohexamer. Zn(2+) serves as cofactor.

It localises to the cellular thylakoid membrane. Functionally, acts as a processive, ATP-dependent zinc metallopeptidase for both cytoplasmic and membrane proteins. Plays a role in the quality control of integral membrane proteins. The protein is ATP-dependent zinc metalloprotease FtsH of Nostoc sp. (strain PCC 7120 / SAG 25.82 / UTEX 2576).